The chain runs to 224 residues: Perchlorate reductase assembly chaperone protein (224 aa).

This sequence belongs to the type II DMSO reductase enzyme chaperone family.

The protein localises to the cytoplasm. May function as a system-specific molybdenum chaperone protein essential for the assembly of the perchlorate reductase PcrAB complex prior to its periplasmic translocation via the Tat pathway. In Dechloromonas aromatica (strain RCB), this protein is Perchlorate reductase assembly chaperone protein (pcrD).